Consider the following 71-residue polypeptide: Translation initiation factor IF-1 (71 aa).

The 71-residue stretch at 1-71 folds into the S1-like domain; the sequence is MANDVIEIEG…TKGRITYRFR (71 aa).

Belongs to the IF-1 family. In terms of assembly, component of the 30S ribosomal translation pre-initiation complex which assembles on the 30S ribosome in the order IF-2 and IF-3, IF-1 and N-formylmethionyl-tRNA(fMet); mRNA recruitment can occur at any time during PIC assembly.

It localises to the cytoplasm. One of the essential components for the initiation of protein synthesis. Stabilizes the binding of IF-2 and IF-3 on the 30S subunit to which N-formylmethionyl-tRNA(fMet) subsequently binds. Helps modulate mRNA selection, yielding the 30S pre-initiation complex (PIC). Upon addition of the 50S ribosomal subunit IF-1, IF-2 and IF-3 are released leaving the mature 70S translation initiation complex. This chain is Translation initiation factor IF-1, found in Leuconostoc mesenteroides subsp. mesenteroides (strain ATCC 8293 / DSM 20343 / BCRC 11652 / CCM 1803 / JCM 6124 / NCDO 523 / NBRC 100496 / NCIMB 8023 / NCTC 12954 / NRRL B-1118 / 37Y).